The sequence spans 140 residues: Peptidyl-prolyl cis-trans isomerase FKBP2 (140 aa).

Residues 1 to 20 form the signal peptide; it reads MRLSWVLTVLSICLSALVTA. The region spanning 47–135 is the PPIase FKBP-type domain; it reads GDVLHMHYTG…VFEVELLKIE (89 aa).

This sequence belongs to the FKBP-type PPIase family. FKBP2 subfamily. Interacts with ARFGEF1/BIG1 and the C-terminal of EPB41L2.

The protein resides in the endoplasmic reticulum membrane. The catalysed reaction is [protein]-peptidylproline (omega=180) = [protein]-peptidylproline (omega=0). With respect to regulation, inhibited by both FK506 and rapamycin. In terms of biological role, PPIases accelerate the folding of proteins. It catalyzes the cis-trans isomerization of proline imidic peptide bonds in oligopeptides. The protein is Peptidyl-prolyl cis-trans isomerase FKBP2 (FKBP2) of Bos taurus (Bovine).